A 426-amino-acid polypeptide reads, in one-letter code: Glutamate-1-semialdehyde 2,1-aminomutase (426 aa).

At Lys-265 the chain carries N6-(pyridoxal phosphate)lysine.

Belongs to the class-III pyridoxal-phosphate-dependent aminotransferase family. HemL subfamily. As to quaternary structure, homodimer. Pyridoxal 5'-phosphate serves as cofactor.

The protein resides in the cytoplasm. The enzyme catalyses (S)-4-amino-5-oxopentanoate = 5-aminolevulinate. It participates in porphyrin-containing compound metabolism; protoporphyrin-IX biosynthesis; 5-aminolevulinate from L-glutamyl-tRNA(Glu): step 2/2. The sequence is that of Glutamate-1-semialdehyde 2,1-aminomutase from Salmonella paratyphi A (strain ATCC 9150 / SARB42).